The primary structure comprises 346 residues: Partitioning defective 6 homolog alpha (346 aa).

Positions 1–116 (MARPQRTPAR…SNSLQRRKKG (116 aa)) are interaction with PRKCI and PRKCZ. Residues 15–95 (IVEVKSKFDA…PPLRLLVQKR (81 aa)) form the PB1 domain. The interaction with PARD3 and CDC42 stretch occupies residues 126-253 (RTRPPLLISL…VTVKPANQRN (128 aa)). Residues 133–150 (ISLPQDFRQVSSVIDVDL) enclose the Pseudo-CRIB domain. One can recognise a PDZ domain in the interval 157–250 (RVRLHKHGSD…NLIVTVKPAN (94 aa)). The interval 257–346 (RGASGRLTGP…IRGDGSGFSL (90 aa)) is disordered. 2 positions are modified to phosphoserine: serine 278 and serine 345.

Belongs to the PAR6 family. As to quaternary structure, interacts with MAP2K5. Interacts with PARD3. Interacts with GTP-bound forms of CDC42, RHOQ/TC10 and RAC1. Interacts with the N-terminal part of PRKCI and PRKCZ. Part of a complex with PARD3, CDC42 or RAC1 and PRKCI or PRKCZ. Part of a complex with LLGL1 and PRKCI. Interacts with human T-cell leukemia virus type I TAX protein. Interacts with PALS1 and CRB3. Interacts with TGFBR1; involved in TGF-beta induced epithelial to mesenchymal transition. Interacts with ECT2 ('Thr-359' phosphorylated form) and PRKCI. Interacts with DCTN1 and PCM1. Phosphorylated by the TGF-beta receptor. In terms of processing, ubiquitinated by the SCF(FBXO31) complex, leading to its proteasomal degradation. Expressed in pancreas, skeletal muscle, brain and heart. Weakly expressed in kidney and placenta.

Its subcellular location is the cytoplasm. The protein localises to the cell membrane. It is found in the cell projection. It localises to the ruffle. The protein resides in the cell junction. Its subcellular location is the tight junction. The protein localises to the cytoskeleton. It is found in the microtubule organizing center. It localises to the centrosome. The protein resides in the centriolar satellite. Adapter protein involved in asymmetrical cell division and cell polarization processes. Probably involved in the formation of epithelial tight junctions. Association with PARD3 may prevent the interaction of PARD3 with F11R/JAM1, thereby preventing tight junction assembly. The PARD6-PARD3 complex links GTP-bound Rho small GTPases to atypical protein kinase C proteins. Regulates centrosome organization and function. Essential for the centrosomal recruitment of key proteins that control centrosomal microtubule organization. This is Partitioning defective 6 homolog alpha (PARD6A) from Homo sapiens (Human).